The chain runs to 1337 residues: Sister chromatid cohesion protein PDS5 homolog A (1337 aa).

Position 1 is an N-acetylmethionine (methionine 1). An HEAT repeat occupies 393–429 (ALVNDQLLGFVRERTLDKRWRVRKEAMMGLAQLYKKY). Position 1097 is a phosphoserine (serine 1097). Lysine 1146 is subject to N6-acetyllysine. Residues 1150–1337 (ATGRKPYVRS…PAERQIDLQR (188 aa)) are disordered. Residues 1159-1180 (STGTETGSNINVNSELNPSTGN) are compositionally biased toward polar residues. Serine 1195 bears the Phosphoserine mark. The residue at position 1208 (threonine 1208) is a Phosphothreonine. At lysine 1211 the chain carries N6-acetyllysine. Residues 1223–1233 (SDQATQGNISS) show a composition bias toward polar residues. N6-acetyllysine is present on lysine 1290. Position 1305 is a phosphoserine (serine 1305). Residues 1321-1337 (DLAKKAAPAERQIDLQR) show a composition bias toward basic and acidic residues.

It belongs to the PDS5 family. In terms of assembly, interacts with the cohesin complex. Interacts with WAPL (via FGF motifs) or CDCA5 (via the FGF motif); the interaction is direct, cohesin-dependent and competitive. Interacts with SMC3. Interacts with TP63. In terms of tissue distribution, highest level in colon. Low levels in lung, ovary, breast and kidney. Reduced level in renal tumor tissue. Isoform 2 is expressed in kidney.

It localises to the nucleus. Probable regulator of sister chromatid cohesion in mitosis which may stabilize cohesin complex association with chromatin. May couple sister chromatid cohesion during mitosis to DNA replication. Cohesion ensures that chromosome partitioning is accurate in both meiotic and mitotic cells and plays an important role in DNA repair. The chain is Sister chromatid cohesion protein PDS5 homolog A from Homo sapiens (Human).